Consider the following 352-residue polypeptide: Heat-inducible transcription repressor HrcA (352 aa).

It belongs to the HrcA family.

Its function is as follows. Negative regulator of class I heat shock genes (grpE-dnaK-dnaJ and groELS operons). Prevents heat-shock induction of these operons. This is Heat-inducible transcription repressor HrcA from Latilactobacillus sakei subsp. sakei (strain 23K) (Lactobacillus sakei subsp. sakei).